The chain runs to 287 residues: Phospholipid phosphatase 2 (287 aa).

Over 1–4 the chain is Cytoplasmic; the sequence is MERR. A helical membrane pass occupies residues 5 to 25; sequence WVFVLLDVLCVLVAALPCAIL. Topologically, residues 26 to 51 are lumenal; the sequence is TFVNTPYKRGFYCGDDSIRYPYRPDT. Residues 52–72 traverse the membrane as a helical segment; it reads ITHGLMAGVIITATVILVSAG. The Cytoplasmic portion of the chain corresponds to 73–87; sequence EAYLVYTDRLYSRSD. Residues 88–108 form a helical membrane-spanning segment; that stretch reads FNNYLAALYKVVGTFLFGAAV. The Lumenal portion of the chain corresponds to 109 to 161; that stretch reads SQSLTDLAKYMTGRLRPNFLAVCDPDWSRVNCSAYVQVEVCRGSSANVTESRL. The segment at 117 to 125 is phosphatase sequence motif I; sequence KYMTGRLRP. Asn139 and Asn155 each carry an N-linked (GlcNAc...) asparagine glycan. Residues 162 to 182 form a helical membrane-spanning segment; the sequence is SFYSGHSSFGMYCMVFLALYV. Residues 164 to 167 form a phosphatase sequence motif II region; sequence YSGH. His167 acts as the Proton donors in catalysis. Residues 183–193 lie on the Cytoplasmic side of the membrane; the sequence is QARLCWKWARL. Residues 194 to 211 form a helical membrane-spanning segment; the sequence is LRPTVQFFLVAFALYVGY. At 212-218 the chain is on the lumenal side; sequence TRVSDHK. The interval 212 to 223 is phosphatase sequence motif III; sequence TRVSDHKHHWSD. His219 acts as the Nucleophile in catalysis. A helical transmembrane segment spans residues 219–239; that stretch reads HHWSDVLVGLLQGALVASLTV. Topologically, residues 240 to 287 are cytoplasmic; the sequence is RYISDFFKARPPQHCPEEEDLERKPSLSLTLALGETDCNHYGYPVSSS.

Belongs to the PA-phosphatase related phosphoesterase family. As to quaternary structure, forms functional homodimers and homooligomers. Can also form heterooligomers with PLPP1 and PLPP3. Post-translationally, N-glycosylated.

The protein localises to the membrane. Its subcellular location is the cell membrane. It is found in the early endosome membrane. The protein resides in the endoplasmic reticulum membrane. It catalyses the reaction a 1,2-diacyl-sn-glycero-3-phosphate + H2O = a 1,2-diacyl-sn-glycerol + phosphate. It carries out the reaction 1,2-dihexadecanoyl-sn-glycero-3-phosphate + H2O = 1,2-dihexadecanoyl-sn-glycerol + phosphate. The enzyme catalyses 1,2-di-(9Z-octadecenoyl)-sn-glycero-3-phosphate + H2O = 1,2-di-(9Z-octadecenoyl)-sn-glycerol + phosphate. The catalysed reaction is a monoacyl-sn-glycero-3-phosphate + H2O = a monoacylglycerol + phosphate. It catalyses the reaction (9Z)-octadecenoyl-sn-glycero-3-phosphate + H2O = (9Z-octadecenoyl)-glycerol + phosphate. It carries out the reaction sphing-4-enine 1-phosphate + H2O = sphing-4-enine + phosphate. The enzyme catalyses an N-acylsphing-4-enine 1-phosphate + H2O = an N-acylsphing-4-enine + phosphate. The catalysed reaction is N-(octanoyl)-sphing-4-enine-1-phosphate + H2O = N-octanoylsphing-4-enine + phosphate. It catalyses the reaction N-(9Z-octadecenoyl)-ethanolamine phosphate + H2O = N-(9Z-octadecenoyl) ethanolamine + phosphate. It participates in lipid metabolism; phospholipid metabolism. With respect to regulation, magnesium-independent phospholipid phosphatase. Insensitive to N-ethylmaleimide. In terms of biological role, magnesium-independent phospholipid phosphatase that catalyzes the dephosphorylation of a variety of glycerolipid and sphingolipid phosphate esters including phosphatidate/PA, lysophosphatidate/LPA, sphingosine 1-phosphate/S1P and ceramide 1-phosphate/C1P. Has no apparent extracellular phosphatase activity and therefore most probably acts intracellularly. Also acts on N-oleoyl ethanolamine phosphate/N-(9Z-octadecenoyl)-ethanolamine phosphate, a potential physiological compound. Through dephosphorylation of these bioactive lipid mediators produces new bioactive compounds and may regulate signal transduction in different cellular processes. Indirectly regulates, for instance, cell cycle G1/S phase transition through its phospholipid phosphatase activity. The sequence is that of Phospholipid phosphatase 2 from Bos taurus (Bovine).